The following is a 486-amino-acid chain: Cysteine--tRNA ligase (486 aa).

Residue Cys-29 participates in Zn(2+) binding. The short motif at Val-31 to His-41 is the 'HIGH' region element. Positions 214, 239, and 243 each coordinate Zn(2+). The 'KMSKS' region signature appears at Lys-271–Ser-275. An ATP-binding site is contributed by Lys-274.

It belongs to the class-I aminoacyl-tRNA synthetase family. Monomer. Requires Zn(2+) as cofactor.

Its subcellular location is the cytoplasm. It carries out the reaction tRNA(Cys) + L-cysteine + ATP = L-cysteinyl-tRNA(Cys) + AMP + diphosphate. The chain is Cysteine--tRNA ligase from Trichormus variabilis (strain ATCC 29413 / PCC 7937) (Anabaena variabilis).